We begin with the raw amino-acid sequence, 119 residues long: Holo-[acyl-carrier-protein] synthase (119 aa).

Residues Asp7 and Glu56 each contribute to the Mg(2+) site.

This sequence belongs to the P-Pant transferase superfamily. AcpS family. It depends on Mg(2+) as a cofactor.

It localises to the cytoplasm. The catalysed reaction is apo-[ACP] + CoA = holo-[ACP] + adenosine 3',5'-bisphosphate + H(+). Transfers the 4'-phosphopantetheine moiety from coenzyme A to a Ser of acyl-carrier-protein. This chain is Holo-[acyl-carrier-protein] synthase, found in Chlamydia trachomatis serovar D (strain ATCC VR-885 / DSM 19411 / UW-3/Cx).